A 94-amino-acid chain; its full sequence is Integration host factor subunit beta (94 aa).

The protein belongs to the bacterial histone-like protein family. As to quaternary structure, heterodimer of an alpha and a beta chain.

Functionally, this protein is one of the two subunits of integration host factor, a specific DNA-binding protein that functions in genetic recombination as well as in transcriptional and translational control. The sequence is that of Integration host factor subunit beta (ihfB) from Serratia marcescens.